The chain runs to 261 residues: Cathepsin G (261 aa).

The N-terminal stretch at 1-18 (MQPLLLLLTFILLQGDEA) is a signal peptide. A propeptide spans 19-20 (GK) (activation peptide). An important for antimicrobial activity region spans residues 21-25 (IIGGR). Residues 21–243 (IIGGREARPH…FMPWIKRTMR (223 aa)) form the Peptidase S1 domain. A disulfide bond links Cys-49 and Cys-65. His-64 functions as the Charge relay system in the catalytic mechanism. Asn-71 carries an N-linked (GlcNAc...) asparagine glycan. Residues 97 to 111 (HPDYNPQNIRNDIML) are important for antimicrobial activity. Asp-108 serves as the catalytic Charge relay system. 2 disulfide bridges follow: Cys-142–Cys-207 and Cys-172–Cys-186. Catalysis depends on Ser-201, which acts as the Charge relay system.

It belongs to the peptidase S1 family. In terms of tissue distribution, in adult, detected only in bone marrow where expression is restricted to a small population of early myeloid cells.

The protein localises to the cell membrane. The protein resides in the cytoplasmic granule. It is found in the secreted. It localises to the cytoplasm. Its subcellular location is the cytosol. The protein localises to the lysosome. The protein resides in the nucleus. The enzyme catalyses Specificity similar to chymotrypsin C.. With respect to regulation, inhibited by chymostatin, phenylmethanesulfonyl fluoride and diisopropyl fluorophosphate. Functionally, serine protease with trypsin- and chymotrypsin-like specificity. Also displays antibacterial activity against Gram-negative and Gram-positive bacteria independent of its protease activity. Prefers Phe and Tyr residues in the P1 position of substrates but also cleaves efficiently after Trp and Leu. Shows a preference for negatively charged amino acids in the P2' position and for aliphatic amino acids both upstream and downstream of the cleavage site. Required for recruitment and activation of platelets which is mediated by the F2RL3/PAR4 platelet receptor. Binds reversibly to and stimulates B cells and CD4(+) and CD8(+) T cells. Also binds reversibly to natural killer (NK) cells and enhances NK cell cytotoxicity through its protease activity. Cleaves complement C3. Cleaves vimentin. Cleaves thrombin receptor F2R/PAR1. Cleaves the synovial mucin-type protein PRG4/lubricin. Cleaves and activates IL36G which promotes expression of chemokines CXCL1 and CXLC8 in keratinocytes. Cleaves IL33 into mature forms which have greater activity than the unprocessed form. Cleaves coagulation factor F8 to produce a partially activated form. Also cleaves and activates coagulation factor F10. Cleaves leukocyte cell surface protein SPN/CD43 to release its extracellular domain and trigger its intramembrane proteolysis by gamma-secretase, releasing the CD43 cytoplasmic tail chain (CD43-ct) which translocates to the nucleus. During apoptosis, cleaves SMARCA2/BRM to produce a 160 kDa cleavage product which localizes to the cytosol. Cleaves MBP in B cell lysosomes at '221-Phe-|-Lys-222', degrading the major immunogenic MBP epitope and preventing the activation of MBP-specific autoreactive T cells. Cleaves annexin ANXA1 and antimicrobial peptide CAMP to produce peptides which act on neutrophil N-formyl peptide receptors to enhance the release of CXCL2. Acts as a ligand for the N-formyl peptide receptor FPR1, enhancing phagocyte chemotaxis. Has antibacterial activity against the Gram-negative bacteria N.gonorrhoeae and P.aeruginosa. Likely to act against N.gonorrhoeae by interacting with N.gonorrhoeae penA/PBP2. Exhibits potent antimicrobial activity against the Gram-positive bacterium L.monocytogenes. Has antibacterial activity against the Gram-positive bacterium S.aureus and degrades S.aureus biofilms, allowing polymorphonuclear leukocytes to penetrate the biofilm and phagocytose bacteria. Has antibacterial activity against M.tuberculosis. Induces platelet aggregation which is strongly potentiated in the presence of ELANE. This chain is Cathepsin G (Ctsg), found in Mus musculus (Mouse).